The chain runs to 301 residues: Chitosanase (301 aa).

The first 42 residues, 1 to 42, serve as a signal peptide directing secretion; it reads MHMSNARPSKSRTKFLLAFLCFTLMASLFGATALFGPSKAAA. Glu79 acts as the Proton donor in catalysis. The cysteines at positions 92 and 166 are disulfide-linked. Asp97 serves as the catalytic Nucleophile.

This sequence belongs to the glycosyl hydrolase 46 family.

Its subcellular location is the secreted. The enzyme catalyses Endohydrolysis of beta-(1-&gt;4)-linkages between D-glucosamine residues in a partly acetylated chitosan.. Aids in the defense against invading fungal pathogens by degrading their cell wall chitosan. The sequence is that of Chitosanase (csn) from Niallia circulans (Bacillus circulans).